The chain runs to 281 residues: Pantothenate synthetase (281 aa).

Residue Met30–His37 participates in ATP binding. His37 acts as the Proton donor in catalysis. (R)-pantoate is bound at residue Gln61. Position 61 (Gln61) interacts with beta-alanine. Residue Gly149–Asp152 participates in ATP binding. Gln155 provides a ligand contact to (R)-pantoate. ATP-binding positions include Ile178 and Met186–Arg189.

This sequence belongs to the pantothenate synthetase family. Homodimer.

It is found in the cytoplasm. The catalysed reaction is (R)-pantoate + beta-alanine + ATP = (R)-pantothenate + AMP + diphosphate + H(+). Its pathway is cofactor biosynthesis; (R)-pantothenate biosynthesis; (R)-pantothenate from (R)-pantoate and beta-alanine: step 1/1. Functionally, catalyzes the condensation of pantoate with beta-alanine in an ATP-dependent reaction via a pantoyl-adenylate intermediate. This Shewanella oneidensis (strain ATCC 700550 / JCM 31522 / CIP 106686 / LMG 19005 / NCIMB 14063 / MR-1) protein is Pantothenate synthetase.